Consider the following 489-residue polypeptide: MFSFGFLITAVVFWVVTKVIYNAYFHPLRRFPGPFLNRATRLAYIYQVLGGKIHHSVLAMHQKYGDIVRLAPDELSFSHPDAWEHIMGHKKADQEEMGKAPWFYRTFKYEALSIVNEDRKPHARLRRPMSHGFSEQSLRDQGPVIRGYVDLFCQRLREASAKSQLVVLSDWLSYVAFDIVGDLSFGEPFGCLKEGKEDEWLTSMANLGTTGVIFQCLGFFPWIKEPLVMIFAKTMRKYRDAHLSSSTEKMRRRIEFNGERPDFIQGLLQKREQLNLRLEDLVSNAQLFIGAGAESTATLLMGVAYLLLKHDRVYEKLSDEIHSAFKNVDEITLTSVGQLPYLNACINETLRYYSPACNGLPRMVPKGGGYILGEYVPENTTVAVHHWALYHREKYFADPDSFRPERFLGDLEFANDQLKALQPFHVGPRNCLGRTLVYGETRLIFVLLIFHFHLRLAEESQNWMEQRHWLMWEKSPLMVHLTPREAVLC.

Transmembrane regions (helical) follow at residues Met-1 to Tyr-21, Val-212 to Ala-232, and Leu-287 to Leu-307. 2 N-linked (GlcNAc...) asparagine glycosylation sites follow: Asn-347 and Asn-379. Cys-431 serves as a coordination point for heme.

Belongs to the cytochrome P450 family. Heme is required as a cofactor.

It is found in the membrane. It functions in the pathway secondary metabolite biosynthesis; terpenoid biosynthesis. Functionally, cytochrome P450 monooxygenase; part of the gene cluster that mediates the biosynthesis of paraherquonin, a meroterpenoid with a unique, highly congested hexacyclic molecular architecture. The first step of the pathway is the synthesis of 3,5-dimethylorsellinic acid (DMOA) by the polyketide synthase prhL. Synthesis of DMOA is followed by farnesylation by the prenyltransferase prhE, methylesterification by the methyl-transferase prhM, epoxidation of the prenyl chain by the flavin-dependent monooxygenase prhF, and cyclization of the farnesyl moiety by the terpene cyclase prhH, to yield the tetracyclic intermediate, protoaustinoid A. The short chain dehydrogenase prhI then oxidizes the C-3 alcohol group of the terpene cyclase product to transform protoaustinoid A into protoaustinoid B. The FAD-binding monooxygenase prhJ catalyzes the oxidation of protoaustinoid B into preaustinoid A which is further oxidized into preaustinoid A1 by FAD-binding monooxygenase phrK. Finally, prhA leads to berkeleydione via the berkeleyone B intermediate. PrhA is a multifunctional dioxygenase that first desaturates at C5-C6 to form berkeleyone B, followed by rearrangement of the A/B-ring to form the cycloheptadiene moiety in berkeleydione. Berkeleydione serves as the key intermediate for the biosynthesis of paraherquonin as well as many other meroterpenoids. The cytochrome P450 monooxygenases prhB, prhD, and prhN, as well as the isomerase prhC, are probably involved in the late stage of paraherquonin biosynthesis, after the production of berkeleydione. Especially prhC might be a multifunctional enzyme that catalyzes the D-ring expansion via intramolecular methoxy rearrangement, as well as the hydrolysis of the expanded D-ring. This chain is Cytochrome P450 monooxygenase prhB, found in Penicillium brasilianum.